The chain runs to 216 residues: Mediator of RNA polymerase II transcription subunit 6 (216 aa).

The interval 157–187 (YPKLSNDNLEVDHSNTNEPADENKNQSIENA) is disordered.

This sequence belongs to the Mediator complex subunit 6 family. In terms of assembly, component of the Mediator complex.

It localises to the nucleus. In terms of biological role, component of the Mediator complex, a coactivator involved in the regulated transcription of nearly all RNA polymerase II-dependent genes. Mediator functions as a bridge to convey information from gene-specific regulatory proteins to the basal RNA polymerase II transcription machinery. Mediator is recruited to promoters by direct interactions with regulatory proteins and serves as a scaffold for the assembly of a functional preinitiation complex with RNA polymerase II and the general transcription factors. The protein is Mediator of RNA polymerase II transcription subunit 6 (med6) of Schizosaccharomyces pombe (strain 972 / ATCC 24843) (Fission yeast).